The following is a 268-amino-acid chain: Eukaryotic translation initiation factor 2 subunit beta (268 aa).

Basic and acidic residues predominate over residues 1 to 12 (MADEINEIREEQ). The interval 1 to 85 (MADEINEIRE…LNNESVDAGE (85 aa)) is disordered. A2 carries the post-translational modification N-acetylalanine. Phosphoserine; by CK2 is present on residues S42, S80, and S112. Residues 222–246 (CLGCKSPDTILSKENRLFFLRCEKC) form a C4-type zinc finger.

Belongs to the eIF-2-beta/eIF-5 family. In terms of assembly, eukaryotic translation initiation factor 2 eIF2 is a heterotrimeric complex composed of an alpha, a beta and a gamma subunit. Post-translationally, phosphorylated at Ser-42, Ser-80 and Ser-112 by CK2.

Its subcellular location is the cytoplasm. It is found in the cytosol. In terms of biological role, component of the eIF2 complex that functions in the early steps of protein synthesis by forming a ternary complex with GTP and initiator tRNA. This complex binds to a 40S ribosomal subunit, followed by mRNA binding to form a 43S pre-initiation complex (43S PIC). Junction of the 60S ribosomal subunit to form the 80S initiation complex is preceded by hydrolysis of the GTP bound to eIF2 and release of an eIF2-GDP binary complex. In order for eIF2 to recycle and catalyze another round of initiation, the GDP bound to eIF2 must exchange with GTP by way of a reaction catalyzed by eIF2B. The protein is Eukaryotic translation initiation factor 2 subunit beta of Arabidopsis thaliana (Mouse-ear cress).